The primary structure comprises 890 residues: Calcium-transporting ATPase (890 aa).

The Cytoplasmic segment spans residues 1–47 (MKFHEMGQTDLLEATNTSMKQGLTEKEVKKRLDKHGPNELQEGKKTS). A helical transmembrane segment spans residues 48–68 (ALLLFFAQFKDFMVLVLLAAT). Residues 69-78 (LISGFLGEYV) are Extracellular-facing. A helical transmembrane segment spans residues 79–99 (DAVAIIAIVFVNGILGFFQER). At 100–238 (RAEQSLQALK…TLSTPLQRRL (139 aa)) the chain is on the cytoplasmic side. The helical transmembrane segment at 239 to 258 (EQLGKILIVVALLLTVLVVA) threads the bilayer. Topologically, residues 259-270 (VGVIQGHDLYSM) are extracellular. Residues 271 to 288 (FLAGVSLAVAAIPEGLPA) form a helical membrane-spanning segment. 4 residues coordinate Ca(2+): Val279, Ala280, Ile282, and Glu284. At 289 to 688 (IVTVALSLGV…KEGRNIYENI (400 aa)) the chain is on the cytoplasmic side. Asp326 acts as the 4-aspartylphosphate intermediate in catalysis. Residues Asp633 and Asp637 each contribute to the Mg(2+) site. The chain crosses the membrane as a helical span at residues 689–708 (RKFIRYLLASNVGEILVMLF). Positions 699 and 702 each coordinate Ca(2+). Topologically, residues 709–718 (AMLLALPLPL) are extracellular. Residues 719–739 (VPIQILWVNLVTDGLPAMALG) traverse the membrane as a helical segment. Ca(2+) contacts are provided by Asn727, Thr730, and Asp731. Over 740–759 (MDQPEGDVMKRKPRHPKEGV) the chain is Cytoplasmic. A helical transmembrane segment spans residues 760-782 (FARKLGWKVVSRGFLIGVATILA). Topologically, residues 783-798 (FIIVYHRNPENLAYAQ) are extracellular. A helical membrane pass occupies residues 799-818 (TIAFATLVLAQLIHVFDCRS). The Cytoplasmic segment spans residues 819 to 830 (ETSVFSRNPFQN). The chain crosses the membrane as a helical span at residues 831–849 (LYLIGAVLSSILLMLVVIY). Residues 850–864 (YPPLQPIFHTVAITP) are Extracellular-facing. A helical membrane pass occupies residues 865–885 (GDWMLVIGMSAIPTFLLAGSL). At 886–890 (LTRKK) the chain is on the cytoplasmic side.

Belongs to the cation transport ATPase (P-type) (TC 3.A.3) family. Type IIA subfamily. Post-translationally, phosphorylated in a Ca(2+)-dependent manner starting 4 hours after shifting to sporulation medium.

Its subcellular location is the cell membrane. It catalyses the reaction Ca(2+)(in) + ATP + H2O = Ca(2+)(out) + ADP + phosphate + H(+). In terms of biological role, this magnesium-dependent enzyme catalyzes the hydrolysis of ATP coupled with the transport of calcium. The sequence is that of Calcium-transporting ATPase (yloB) from Bacillus subtilis (strain 168).